Reading from the N-terminus, the 279-residue chain is Diaminopimelate epimerase (279 aa).

2 residues coordinate substrate: asparagine 14 and glutamine 68. Catalysis depends on cysteine 77, which acts as the Proton donor. Residues 78–79 (GN), asparagine 191, and 207–208 (ER) contribute to the substrate site. The active-site Proton acceptor is the cysteine 217. 218–219 (GT) serves as a coordination point for substrate.

Belongs to the diaminopimelate epimerase family. In terms of assembly, homodimer.

It localises to the cytoplasm. It carries out the reaction (2S,6S)-2,6-diaminopimelate = meso-2,6-diaminopimelate. It participates in amino-acid biosynthesis; L-lysine biosynthesis via DAP pathway; DL-2,6-diaminopimelate from LL-2,6-diaminopimelate: step 1/1. Its function is as follows. Catalyzes the stereoinversion of LL-2,6-diaminopimelate (L,L-DAP) to meso-diaminopimelate (meso-DAP), a precursor of L-lysine. This is Diaminopimelate epimerase from Methanothrix thermoacetophila (strain DSM 6194 / JCM 14653 / NBRC 101360 / PT) (Methanosaeta thermophila).